The primary structure comprises 212 residues: Thiamine-phosphate synthase (212 aa).

Residues 39-43 (QLRIK) and Asn-71 contribute to the 4-amino-2-methyl-5-(diphosphooxymethyl)pyrimidine site. The Mg(2+) site is built by Asp-72 and Asp-91. A 4-amino-2-methyl-5-(diphosphooxymethyl)pyrimidine-binding site is contributed by Ser-110. A 2-[(2R,5Z)-2-carboxy-4-methylthiazol-5(2H)-ylidene]ethyl phosphate-binding site is contributed by 136-138 (TQT). Lys-139 provides a ligand contact to 4-amino-2-methyl-5-(diphosphooxymethyl)pyrimidine. 2-[(2R,5Z)-2-carboxy-4-methylthiazol-5(2H)-ylidene]ethyl phosphate is bound by residues Gly-168 and 188–189 (VS).

The protein belongs to the thiamine-phosphate synthase family. Mg(2+) serves as cofactor.

It carries out the reaction 2-[(2R,5Z)-2-carboxy-4-methylthiazol-5(2H)-ylidene]ethyl phosphate + 4-amino-2-methyl-5-(diphosphooxymethyl)pyrimidine + 2 H(+) = thiamine phosphate + CO2 + diphosphate. The catalysed reaction is 2-(2-carboxy-4-methylthiazol-5-yl)ethyl phosphate + 4-amino-2-methyl-5-(diphosphooxymethyl)pyrimidine + 2 H(+) = thiamine phosphate + CO2 + diphosphate. It catalyses the reaction 4-methyl-5-(2-phosphooxyethyl)-thiazole + 4-amino-2-methyl-5-(diphosphooxymethyl)pyrimidine + H(+) = thiamine phosphate + diphosphate. The protein operates within cofactor biosynthesis; thiamine diphosphate biosynthesis; thiamine phosphate from 4-amino-2-methyl-5-diphosphomethylpyrimidine and 4-methyl-5-(2-phosphoethyl)-thiazole: step 1/1. In terms of biological role, condenses 4-methyl-5-(beta-hydroxyethyl)thiazole monophosphate (THZ-P) and 2-methyl-4-amino-5-hydroxymethyl pyrimidine pyrophosphate (HMP-PP) to form thiamine monophosphate (TMP). The polypeptide is Thiamine-phosphate synthase (Serratia proteamaculans (strain 568)).